A 564-amino-acid polypeptide reads, in one-letter code: Keratin, type II cytoskeletal 6B (564 aa).

The segment covering Met-1–His-11 has biased composition (low complexity). Positions Met-1 to Ala-23 are disordered. Ala-2 is modified (N-acetylalanine). The head stretch occupies residues Ala-2–Glu-162. A coil 1A region spans residues Glu-163–Leu-198. The IF rod domain occupies Glu-163–Leu-476. Residues Gln-199 to Tyr-217 are linker 1. The coil 1B stretch occupies residues Ile-218 to Met-309. Residues Gln-310–Ile-333 are linker 12. Positions Ile-334–Glu-472 are coil 2. Residues Glu-473 to His-564 are tail. Residues Arg-533–His-564 are disordered. Residues Ala-534–Ser-546 are compositionally biased toward gly residues. Residues Ser-547–His-564 are compositionally biased toward low complexity.

It belongs to the intermediate filament family. As to quaternary structure, heterodimer of a type I and a type II keratin. KRT6 isomers associate with KRT16 and/or KRT17. In terms of tissue distribution, constitutively expressed in distinct types of epithelia such as those in oral mucosa, esophagus, papillae of tongue and hair follicle outer root sheath.

The sequence is that of Keratin, type II cytoskeletal 6B (KRT6B) from Homo sapiens (Human).